The chain runs to 330 residues: tRNA U34 carboxymethyltransferase (330 aa).

Carboxy-S-adenosyl-L-methionine contacts are provided by residues Lys-91, Trp-105, Lys-110, Gly-130, 152 to 154 (DPS), 181 to 182 (IE), Met-196, Tyr-200, and Arg-315.

The protein belongs to the class I-like SAM-binding methyltransferase superfamily. CmoB family. As to quaternary structure, homotetramer.

It carries out the reaction carboxy-S-adenosyl-L-methionine + 5-hydroxyuridine(34) in tRNA = 5-carboxymethoxyuridine(34) in tRNA + S-adenosyl-L-homocysteine + H(+). Functionally, catalyzes carboxymethyl transfer from carboxy-S-adenosyl-L-methionine (Cx-SAM) to 5-hydroxyuridine (ho5U) to form 5-carboxymethoxyuridine (cmo5U) at position 34 in tRNAs. The sequence is that of tRNA U34 carboxymethyltransferase from Shewanella sediminis (strain HAW-EB3).